A 444-amino-acid chain; its full sequence is Chromosome partition protein MukF (444 aa).

Residues 212 to 240 form a leucine-zipper region; the sequence is LDETSGNLRELQDTLNAAGDKLQAQLLRI.

The protein belongs to the MukF family. Interacts, and probably forms a ternary complex, with MukE and MukB via its C-terminal region. The complex formation is stimulated by calcium or magnesium. It is required for an interaction between MukE and MukB.

It is found in the cytoplasm. The protein localises to the nucleoid. Involved in chromosome condensation, segregation and cell cycle progression. May participate in facilitating chromosome segregation by condensation DNA from both sides of a centrally located replisome during cell division. Not required for mini-F plasmid partitioning. Probably acts via its interaction with MukB and MukE. Overexpression results in anucleate cells. It has a calcium binding activity. The sequence is that of Chromosome partition protein MukF from Haemophilus influenzae (strain PittGG).